The sequence spans 262 residues: Hydroxyethylthiazole kinase (262 aa).

Methionine 39 contributes to the substrate binding site. Residues lysine 115 and threonine 160 each contribute to the ATP site. Glycine 187 serves as a coordination point for substrate.

Belongs to the Thz kinase family. It depends on Mg(2+) as a cofactor.

It carries out the reaction 5-(2-hydroxyethyl)-4-methylthiazole + ATP = 4-methyl-5-(2-phosphooxyethyl)-thiazole + ADP + H(+). The protein operates within cofactor biosynthesis; thiamine diphosphate biosynthesis; 4-methyl-5-(2-phosphoethyl)-thiazole from 5-(2-hydroxyethyl)-4-methylthiazole: step 1/1. Functionally, catalyzes the phosphorylation of the hydroxyl group of 4-methyl-5-beta-hydroxyethylthiazole (THZ). The sequence is that of Hydroxyethylthiazole kinase from Staphylococcus epidermidis (strain ATCC 12228 / FDA PCI 1200).